Reading from the N-terminus, the 1169-residue chain is Translation initiation factor IF-2 (1169 aa).

Disordered stretches follow at residues 69–108 and 139–568; these read IKAK…PLLI and ALSK…LRAA. Basic and acidic residues-rich tracts occupy residues 71–83 and 92–102; these read AKNE…DNKN and HPEKLSKEGLN. Residues 139–156 show a composition bias toward polar residues; it reads ALSKNQNKTNTSVITTPN. Basic and acidic residues predominate over residues 157–171; that stretch reads LKDKKNPSALQDKKP. Residues 196 to 214 show a composition bias toward low complexity; that stretch reads NLANSNRNINANKINNSVN. Positions 231–248 are enriched in polar residues; that stretch reads ADNNNFPKKNLNSPNVKS. The span at 265-281 shows a compositional bias: low complexity; it reads NTNRPNSNSRQPSSNTQ. Composition is skewed to polar residues over residues 282–294, 412–432, and 439–455; these read ISAN…NRQG, MQLQ…NVNK, and NQKT…SPSP. Residues 472-486 are compositionally biased toward basic and acidic residues; the sequence is GRTDWDDSAKLEALR. Residues 544–560 are compositionally biased toward basic residues; sequence KQFKKKKKETTRQRQKR. Residues 661–838 form the tr-type G domain; it reads KRPPVITVMG…EVEDLQANPE (178 aa). Residues 670–677 form a G1 region; the sequence is GHVDHGKT. 670–677 contributes to the GTP binding site; the sequence is GHVDHGKT. The interval 695–699 is G2; it reads GITQH. A G3 region spans residues 720–723; it reads DTPG. Residues 720–724 and 774–777 each bind GTP; these read DTPGH and NKID. A G4 region spans residues 774–777; the sequence is NKID. Positions 810 to 812 are G5; sequence SAI.

This sequence belongs to the TRAFAC class translation factor GTPase superfamily. Classic translation factor GTPase family. IF-2 subfamily.

The protein localises to the cytoplasm. One of the essential components for the initiation of protein synthesis. Protects formylmethionyl-tRNA from spontaneous hydrolysis and promotes its binding to the 30S ribosomal subunits. Also involved in the hydrolysis of GTP during the formation of the 70S ribosomal complex. In Prochlorococcus marinus subsp. pastoris (strain CCMP1986 / NIES-2087 / MED4), this protein is Translation initiation factor IF-2.